A 540-amino-acid polypeptide reads, in one-letter code: MTRPRPVVLIIMDGWGVAPPGPGNAADLADTPHVDEWMATCPFTTLGASGLDVGLPEGQIGNSEVGHLNIGAGFIVYQELTRISKAIADGDFFTNPAFLQAIEHVKQHNSALHLMGLFGPGGVHAHEDHLHALLELAHRQQVRRVYLHLFLDGRDVLPRSALGFLDTLEGVIARLGVGVIATVSGRYYAMDRDKRWERTGRAYAALVDGIGERATSARAAIEAAYANDISDEFVLPTVIVDAHGTPVATVRDGDAVIFTNFRPDRGRQLTRAFVDPDLNERIRQHYERQKAEGQPLPPQIWQRDRQLHDLCFVTMTQYEEGLPVLVAFPPRYVTTPLAAVISQAGMRQFHIAETEKYPHVTFFLNGGREEPFPGEDRRLIPSPKVATYDLKPEMSAPEVTEALLQAITSDQYDFIVVNYANPDMVGHTGSIPAVIKACEAVDAGLARVVPAILERGGVALVIADHGNAEQMIDPETGGPHTAHTTNPAPCFLIGGPGYGKDTIRLRSGGRLADVAPTLLELLELTPPADMTGQSLIVRNL.

Positions 13 and 63 each coordinate Mn(2+). The active-site Phosphoserine intermediate is Ser63. Substrate-binding positions include His124, 154–155 (RD), Arg186, Arg192, 262–265 (RPDR), and Lys356. Residues Asp423, His427, Asp464, His465, and His483 each contribute to the Mn(2+) site.

It belongs to the BPG-independent phosphoglycerate mutase family. In terms of assembly, monomer. The cofactor is Mn(2+).

It catalyses the reaction (2R)-2-phosphoglycerate = (2R)-3-phosphoglycerate. It participates in carbohydrate degradation; glycolysis; pyruvate from D-glyceraldehyde 3-phosphate: step 3/5. Functionally, catalyzes the interconversion of 2-phosphoglycerate and 3-phosphoglycerate. The chain is 2,3-bisphosphoglycerate-independent phosphoglycerate mutase from Chloroflexus aggregans (strain MD-66 / DSM 9485).